Reading from the N-terminus, the 337-residue chain is D-lactate dehydrogenase (337 aa).

NAD(+) contacts are provided by residues 156-157 (HI), Asp-176, 207-208 (VP), Asn-213, 234-236 (CSR), and Asp-260. The active site involves Arg-236. The active site involves Glu-265. Residue His-297 is the Proton donor of the active site.

Belongs to the D-isomer specific 2-hydroxyacid dehydrogenase family. As to quaternary structure, homodimer.

It catalyses the reaction (R)-lactate + NAD(+) = pyruvate + NADH + H(+). The chain is D-lactate dehydrogenase from Lactobacillus helveticus (Lactobacillus suntoryeus).